The following is a 757-amino-acid chain: Chloride anion exchanger (757 aa).

Residues 1 to 71 (MIEAIGNQYV…SWLPAYKIKE (71 aa)) are Cytoplasmic-facing. The helical transmembrane segment at 72–92 (WLLSDIVSGISTGLVAVLQGL) threads the bilayer. Position 93 (Ala-93) is a topological domain, extracellular. The chain crosses the membrane as a helical span at residues 94–114 (FALLVNIPPAYGLYAAFFPVI). Over 115–124 (TYFFLGTSRH) the chain is Cytoplasmic. Residues 125–145 (ISVGPFPVLSMMVGVVVTRVA) traverse the membrane as a helical segment. Over 146–176 (SGSDTSPALSSSSAENDSMIEEKVMVAASVT) the chain is Extracellular. A glycan (N-linked (GlcNAc...) asparagine) is linked at Asn-161. A helical transmembrane segment spans residues 177-197 (VLSGIIQLLLGVLQIGFVVIY). Over 198-201 (LSES) the chain is Cytoplasmic. A helical membrane pass occupies residues 202–222 (LISGFTTAAAIHVLVSQLKFM). Topologically, residues 223–250 (LQLTVPAHSDPFSIFKVLESVFSQIQKT) are extracellular. The helical transmembrane segment at 251-271 (NIADLVTSVIILVVVFVVKEI) threads the bilayer. Topologically, residues 272–278 (NQRYRSK) are cytoplasmic. The chain crosses the membrane as a helical span at residues 279–299 (LPVPIPIELIMTVIATGISYG). The Extracellular segment spans residues 300 to 335 (CNFEQRFGVAVVGNMSLGFQPPITPSVEVFQDTIGD). The chain crosses the membrane as a helical span at residues 336-356 (CFGIAIVGFAVAFSVASVYSL). Over 357-367 (KYDYPIDGNQE) the chain is Cytoplasmic. Residues 368–388 (LIALGVSNIFTGAFKGFAGST) traverse the membrane as a helical segment. Residues 389-404 (ALSRSGVQESTGGKTQ) lie on the Extracellular side of the membrane. A helical membrane pass occupies residues 405–425 (VAGLLSAVIVLIVIVAIGFLL). Over 426 to 462 (QPLQKSVLAALALGNLKGMLMQFAEIGRLWKKDKYDC) the chain is Cytoplasmic. A helical membrane pass occupies residues 463–483 (LIWIMTFIFAIVLGLGLGLAA). The Extracellular segment spans residues 484-757 (SVAFQLLTIV…ECQVPVETKF (274 aa)). One can recognise an STAS domain in the interval 518–713 (NYADVYEPEG…LTIHDAILHI (196 aa)). Residues 754–757 (ETKF) carry the PDZ-binding motif.

Belongs to the SLC26A/SulP transporter (TC 2.A.53) family. As to quaternary structure, interacts with PDZK1, CFTR, SLC26A6 and NHERF1. Interacts (via PDZ-binding motif) with NHERF4 (via the third PDZ domain); interaction leads to decreased expression of SLC26A3 on the cell membrane resulting in its reduced exchanger activity. N-glycosylation is required for efficient cell surface expression, and protection from proteolytic degradation.

It localises to the apical cell membrane. The protein resides in the membrane. Its subcellular location is the cell membrane. It carries out the reaction hydrogencarbonate(in) + 2 chloride(out) = hydrogencarbonate(out) + 2 chloride(in). Mediates chloride-bicarbonate exchange with a chloride bicarbonate stoichiometry of 2:1 in the intestinal epithelia. Plays a role in the chloride and bicarbonate homeostasis during sperm epididymal maturation and capacitation. The protein is Chloride anion exchanger (Slc26a3) of Rattus norvegicus (Rat).